Here is a 316-residue protein sequence, read N- to C-terminus: Adenine deaminase (316 aa).

His-14, His-16, and His-194 together coordinate Zn(2+). The active-site Proton donor is Glu-197. A Zn(2+)-binding site is contributed by Asp-275. Asp-276 is a binding site for substrate.

This sequence belongs to the metallo-dependent hydrolases superfamily. Adenosine and AMP deaminases family. Adenine deaminase type 2 subfamily. The cofactor is Zn(2+).

It carries out the reaction adenine + H2O + H(+) = hypoxanthine + NH4(+). Catalyzes the hydrolytic deamination of adenine to hypoxanthine. Plays an important role in the purine salvage pathway and in nitrogen catabolism. The protein is Adenine deaminase of Pseudomonas aeruginosa (strain UCBPP-PA14).